We begin with the raw amino-acid sequence, 393 residues long: Glutamate 5-kinase 1 (393 aa).

Lys-17 contributes to the ATP binding site. 3 residues coordinate substrate: Ser-57, Asp-144, and Asn-156. Residue 176–177 participates in ATP binding; the sequence is SD. Positions 282 to 359 constitute a PUA domain; that stretch reads AGSLSIDAGA…AEIAAILGYA (78 aa).

It belongs to the glutamate 5-kinase family.

The protein localises to the cytoplasm. The enzyme catalyses L-glutamate + ATP = L-glutamyl 5-phosphate + ADP. It participates in amino-acid biosynthesis; L-proline biosynthesis; L-glutamate 5-semialdehyde from L-glutamate: step 1/2. In terms of biological role, catalyzes the transfer of a phosphate group to glutamate to form L-glutamate 5-phosphate. The protein is Glutamate 5-kinase 1 of Rhizobium meliloti (strain 1021) (Ensifer meliloti).